A 76-amino-acid polypeptide reads, in one-letter code: Large ribosomal subunit protein uL24 (76 aa).

Belongs to the universal ribosomal protein uL24 family. As to quaternary structure, part of the 50S ribosomal subunit.

Its function is as follows. One of two assembly initiator proteins, it binds directly to the 5'-end of the 23S rRNA, where it nucleates assembly of the 50S subunit. One of the proteins that surrounds the polypeptide exit tunnel on the outside of the subunit. This chain is Large ribosomal subunit protein uL24, found in Wolinella succinogenes (strain ATCC 29543 / DSM 1740 / CCUG 13145 / JCM 31913 / LMG 7466 / NCTC 11488 / FDC 602W) (Vibrio succinogenes).